Consider the following 66-residue polypeptide: Large ribosomal subunit protein bL35 (66 aa).

Belongs to the bacterial ribosomal protein bL35 family.

The sequence is that of Large ribosomal subunit protein bL35 from Phenylobacterium zucineum (strain HLK1).